The primary structure comprises 239 residues: MHKSSNFSGLNLVKSAPICLLDIFHRCVDSETALDTSLLYLIDMFGTAVFAVSGVLLAGRLKMDPFGVMVLASVTAIGGGTIRDMALGATPVFWIKDTNYLWVIMITCALTMLLVRRPKRLAWWILPVCDAIGLAVFVGIGVEKALIYQDSALIAIIMGVITGCGGGIIRDVLAREIPMVLRSEVYATACIIGGIFHTTALAMGYSSSTALLSGVFSTLLIRLGAIRWHLSLPTFALTK.

Helical transmembrane passes span 38-58, 62-82, 86-106, 122-142, 153-173, and 185-205; these read LLYL…VLLA, KMDP…GGTI, ALGA…VIMI, AWWI…GIGV, LIAI…RDVL, and VYAT…AMGY.

The protein belongs to the UPF0126 family.

It is found in the cell membrane. The sequence is that of UPF0126 membrane protein VC_2382 from Vibrio cholerae serotype O1 (strain ATCC 39315 / El Tor Inaba N16961).